A 141-amino-acid polypeptide reads, in one-letter code: Cholinesterase (141 aa).

N39 is a glycosylation site (N-linked (GlcNAc...) asparagine). A substrate-binding site is contributed by 49–50 (GG). S131 serves as the catalytic Acyl-ester intermediate. S131 bears the Phosphoserine mark.

Belongs to the type-B carboxylesterase/lipase family. As to quaternary structure, homotetramer; disulfide-linked. Dimer of dimers. As to expression, present in most cells except erythrocytes.

The protein localises to the secreted. The catalysed reaction is an acylcholine + H2O = a carboxylate + choline + H(+). Functionally, esterase with broad substrate specificity. Contributes to the inactivation of the neurotransmitter acetylcholine. Can degrade neurotoxic organophosphate esters. The protein is Cholinesterase (BCHE) of Canis lupus familiaris (Dog).